The primary structure comprises 185 residues: ATP-dependent protease subunit HslV (185 aa).

T12 is an active-site residue. Residues A168, C171, and T174 each coordinate Na(+).

The protein belongs to the peptidase T1B family. HslV subfamily. A double ring-shaped homohexamer of HslV is capped on each side by a ring-shaped HslU homohexamer. The assembly of the HslU/HslV complex is dependent on binding of ATP.

It localises to the cytoplasm. The catalysed reaction is ATP-dependent cleavage of peptide bonds with broad specificity.. Its activity is regulated as follows. Allosterically activated by HslU binding. Functionally, protease subunit of a proteasome-like degradation complex believed to be a general protein degrading machinery. This Roseobacter denitrificans (strain ATCC 33942 / OCh 114) (Erythrobacter sp. (strain OCh 114)) protein is ATP-dependent protease subunit HslV.